A 258-amino-acid polypeptide reads, in one-letter code: UPF0246 protein YaaA (258 aa).

This sequence belongs to the UPF0246 family.

This Shigella sonnei (strain Ss046) protein is UPF0246 protein YaaA.